Here is a 210-residue protein sequence, read N- to C-terminus: uncharacterized protein (210 aa).

Residues 1 to 21 (MLKMNVKKALVILVALALVAA) form the signal peptide.

This is an uncharacterized protein from Archaeoglobus fulgidus (strain ATCC 49558 / DSM 4304 / JCM 9628 / NBRC 100126 / VC-16).